We begin with the raw amino-acid sequence, 175 residues long: FMRFamide-like neuropeptides 1 (175 aa).

The first 21 residues, 1 to 21, serve as a signal peptide directing secretion; sequence MTLLYQVGLLLLVAATYKVSA. The propeptide occupies 22-68; it reads ECCTPGATSDFCTVFSMLSTMEQNEVMNFIGENCDGDAEVALQKMEK. A Tyrosine amide modification is found at tyrosine 76. A propeptide spanning residues 79 to 86 is cleaved from the precursor; that stretch reads SAAVKSLG. Phenylalanine amide occurs at positions 98, 108, 120, 130, 142, and 154. A propeptide spanning residues 157–165 is cleaved from the precursor; the sequence is SFDNFDRES. Phenylalanine 173 carries the phenylalanine amide modification.

Belongs to the FARP (FMRFamide related peptide) family. Post-translationally, may be processed by convertase egl-3. In terms of tissue distribution, each flp gene is expressed in a distinct set of neurons. Flp-1 is expressed in the AVA interneurons, the M5 cholinergic pharyngeal motoneurons, and the AIA, AIY, AVE, AVK, RIG and RMG neurons.

The protein resides in the secreted. Together with flp-18, plays a homeostatic role by acting on the GABAergic neural transmission at neuromuscular junctions to prevent overexcitation of the locomotor circuit. In terms of biological role, inhibits the activity of dissected pharyngeal myogenic muscle system. Its function is as follows. DPNFLRF-amide: Inhibits the activity of dissected pharyngeal myogenic muscle system. Functionally, acts as a ligand for the npr-22 receptor in vitro. This is FMRFamide-like neuropeptides 1 (flp-1) from Caenorhabditis elegans.